A 188-amino-acid polypeptide reads, in one-letter code: Elongation factor P (188 aa).

Lysine 34 is modified (N6-(3,6-diaminohexanoyl)-5-hydroxylysine).

The protein belongs to the elongation factor P family. In terms of processing, may be beta-lysylated on the epsilon-amino group of Lys-34 by the combined action of EpmA and EpmB, and then hydroxylated on the C5 position of the same residue by EpmC (if this protein is present). Lysylation is critical for the stimulatory effect of EF-P on peptide-bond formation. The lysylation moiety may extend toward the peptidyltransferase center and stabilize the terminal 3-CCA end of the tRNA. Hydroxylation of the C5 position on Lys-34 may allow additional potential stabilizing hydrogen-bond interactions with the P-tRNA.

It localises to the cytoplasm. Its pathway is protein biosynthesis; polypeptide chain elongation. In terms of biological role, involved in peptide bond synthesis. Alleviates ribosome stalling that occurs when 3 or more consecutive Pro residues or the sequence PPG is present in a protein, possibly by augmenting the peptidyl transferase activity of the ribosome. Modification of Lys-34 is required for alleviation. This chain is Elongation factor P, found in Photorhabdus laumondii subsp. laumondii (strain DSM 15139 / CIP 105565 / TT01) (Photorhabdus luminescens subsp. laumondii).